The chain runs to 108 residues: Insulin (108 aa).

An N-terminal signal peptide occupies residues 1–21 (MAVWIQAGALLFLLAVSSVNA). Cystine bridges form between cysteine 30–cysteine 94, cysteine 42–cysteine 107, and cysteine 93–cysteine 98. The propeptide at 54-85 (DVDPPLGFLPPKSAQETEVADFAFKDHAEVIR) is c peptide.

It belongs to the insulin family. Heterodimer of a B chain and an A chain linked by two disulfide bonds.

The protein resides in the secreted. In terms of biological role, insulin decreases blood glucose concentration. It increases cell permeability to monosaccharides, amino acids and fatty acids. It accelerates glycolysis, the pentose phosphate cycle, and glycogen synthesis in liver. This is Insulin (ins) from Cyprinus carpio (Common carp).